The following is a 954-amino-acid chain: E3 ubiquitin-protein ligase MIB2 (954 aa).

One can recognise an MIB/HERC2 1 domain in the interval 1-80 (MDLDPYASMQ…AYDLLLYDNA (80 aa)). A ZZ-type zinc finger spans residues 86 to 138 (HPNIICDCCKKHGIRGMRWKCKMCFDYDLCTQCYMNNKHDLSHAFERYETAHS). Zn(2+) is bound by residues Cys91, Cys94, Cys106, Cys109, Cys115, Cys118, His124, and His128. Residues 149–227 (LTRITLKGTF…KVDLKCTVEA (79 aa)) enclose the MIB/HERC2 2 domain. 9 ANK repeats span residues 464–493 (QGRTALQIASYQGHLDVVKILLQAHATVNL), 497–526 (EGDTALHYAAFGNQADVARVLMAKGAGADL), 530–559 (AKCTALYVAVSQGFTEVVQALCELNCDVNL), 563–591 (HGDTPLHYAITADYKVIIEILTEVPNIDF), 597–626 (QGFNLLHYSALKGNKLAIKKILARARQLVD), 631–661 (DGFTALHLAALNNHKEVAEILIKEGRCDVNV), 665–694 (RNQTPLHLAIIQGHVGLVQLLVSEGSDVNA), 698–726 (DGDTAMHIALERQQLMSVLMEKREGEMGS), and 766–795 (RGKSPLDLITDGRIVQIIKDFSQKFREQQV). 2 consecutive RING-type zinc fingers follow at residues 830–865 (CLVCSELALLIHFFPCQHSIVCEECSRRMKKCIKCQ) and 910–943 (CPICIDDQIKLVFQCGHGSCPDCSTALTVCPICR).

The protein resides in the cytoplasm. It catalyses the reaction S-ubiquitinyl-[E2 ubiquitin-conjugating enzyme]-L-cysteine + [acceptor protein]-L-lysine = [E2 ubiquitin-conjugating enzyme]-L-cysteine + N(6)-ubiquitinyl-[acceptor protein]-L-lysine.. Its pathway is protein modification; protein ubiquitination. Its function is as follows. E3 ubiquitin-protein ligase that mediates ubiquitination of Delta receptors, which act as ligands of Notch proteins. Positively regulates the Delta-mediated Notch signaling by ubiquitinating the intracellular domain of Delta, leading to endocytosis of Delta receptors. The protein is E3 ubiquitin-protein ligase MIB2 (MIB2) of Gallus gallus (Chicken).